The primary structure comprises 206 residues: Casparian strip membrane protein 1 (206 aa).

Position 2 is an N-acetylalanine (alanine 2). At 2–43 (AKESTTIDVGEPSTVTKSSSHVVKDAKKKGFVAVASRGGAKR) the chain is on the cytoplasmic side. The chain crosses the membrane as a helical span at residues 44–64 (GLAIFDFLLRLAAIAVTIGAA). At 65-95 (SVMYTAEETLPFFTQFLQFQAGYDDLPAFQY) the chain is on the extracellular side. Residues 96-116 (FVIAVAVVASYLVLSLPFSIV) traverse the membrane as a helical segment. At 117–127 (SIVRPHAVAPR) the chain is on the cytoplasmic side. Residues 128 to 148 (LILLICDTLVVTLNTSAAAAA) form a helical membrane-spanning segment. The Extracellular segment spans residues 149–180 (ASITYLAHNGNQSTNWLPICQQFGDFCQNVST). Residues asparagine 159 and asparagine 177 are each glycosylated (N-linked (GlcNAc...) asparagine). The helical transmembrane segment at 181–201 (AVVADSIAILFFIVLIIISAI) threads the bilayer. The Cytoplasmic portion of the chain corresponds to 202–206 (ALKRH).

This sequence belongs to the Casparian strip membrane proteins (CASP) family. In terms of assembly, homodimer and heterodimers with other CASP proteins. Interacts with CASP2, CASP3, CASP4 and CASP5.

The protein resides in the cell membrane. In terms of biological role, regulates membrane-cell wall junctions and localized cell wall deposition. Required for establishment of the Casparian strip membrane domain (CSD) and the subsequent formation of Casparian strips, a cell wall modification of the root endodermis that determines an apoplastic barrier between the intraorganismal apoplasm and the extraorganismal apoplasm and prevents lateral diffusion. This chain is Casparian strip membrane protein 1 (CASP1), found in Arabidopsis thaliana (Mouse-ear cress).